The primary structure comprises 146 residues: Large ribosomal subunit protein uL16 (146 aa).

This sequence belongs to the universal ribosomal protein uL16 family. As to quaternary structure, part of the 50S ribosomal subunit.

Binds 23S rRNA and is also seen to make contacts with the A and possibly P site tRNAs. The sequence is that of Large ribosomal subunit protein uL16 from Caulobacter sp. (strain K31).